The primary structure comprises 330 residues: MTEPSRHIPVLGQEAVGLLAPRDGGVYVDATFGAGGYSGLILAAADTRVIGIDRDRTAIAGGFDLVERSGGRLTLVEDRFSNLAEVCAAQGAGLVDGVVMDVGVSSMQLDQSERGFSFRLAGPLDMRMGQSGPSAADVIAVASEAELANIIYIFGEERHSRAVARAIVAARAIEPITTTRALADIVGKVVHAKPGEIHPATRTFQGLRIFVNGELDELHLALSAAERVLKPGGRLVVVSFHSLEDRIVKNFFNARGKTGGGSRHLPELDQEAPSFAILTKRPITAGPDELAGNPRARSAKLRAGERTAALAHPGEDLPAWPTLDAVMGRR.

Residues 35–37, Asp53, Phe80, Asp101, and Gln108 each bind S-adenosyl-L-methionine; that span reads GGY.

Belongs to the methyltransferase superfamily. RsmH family.

It localises to the cytoplasm. The enzyme catalyses cytidine(1402) in 16S rRNA + S-adenosyl-L-methionine = N(4)-methylcytidine(1402) in 16S rRNA + S-adenosyl-L-homocysteine + H(+). Its function is as follows. Specifically methylates the N4 position of cytidine in position 1402 (C1402) of 16S rRNA. The sequence is that of Ribosomal RNA small subunit methyltransferase H from Rhodopseudomonas palustris (strain BisB18).